Here is a 397-residue protein sequence, read N- to C-terminus: N-acetyllactosaminide beta-1,3-N-acetylglucosaminyltransferase 2 (397 aa).

Residues M1 to R7 are Cytoplasmic-facing. The chain crosses the membrane as a helical; Signal-anchor for type II membrane protein span at residues I8–S28. The Lumenal segment spans residues K29–C397. Residues N79, N89, N127, N173, and N219 are each glycosylated (N-linked (GlcNAc...) asparagine).

The protein belongs to the glycosyltransferase 31 family. As to quaternary structure, interacts with B3GNT8; this interaction greatly increases B3GNT2 catalytic activity, independently of B3GNT8 enzymatic activity. The cofactor is Mn(2+). In terms of tissue distribution, ubiquitous.

It is found in the golgi apparatus membrane. It carries out the reaction a beta-D-galactosyl-(1-&gt;4)-N-acetyl-beta-D-glucosaminyl derivative + UDP-N-acetyl-alpha-D-glucosamine = an N-acetyl-beta-D-glucosaminyl-(1-&gt;3)-beta-D-galactosyl-(1-&gt;4)-N-acetyl-beta-D-glucosaminyl derivative + UDP + H(+). The protein operates within protein modification; protein glycosylation. In terms of biological role, beta-1,3-N-acetylglucosaminyltransferase involved in the synthesis of poly-N-acetyllactosamine. Catalyzes the initiation and elongation of poly-N-acetyllactosamine chains. Shows a marked preference for Gal(beta1-4)Glc(NAc)-based acceptors. Probably constitutes the main polylactosamine synthase. The protein is N-acetyllactosaminide beta-1,3-N-acetylglucosaminyltransferase 2 (B3GNT2) of Homo sapiens (Human).